The sequence spans 210 residues: Thymidylate kinase (210 aa).

ATP is bound at residue 14–21 (GLDRSGKS).

The protein belongs to the thymidylate kinase family.

The catalysed reaction is dTMP + ATP = dTDP + ADP. It functions in the pathway pyrimidine metabolism; dTTP biosynthesis. Its function is as follows. Catalyzes the conversion of dTMP to dTDP. This Schizosaccharomyces pombe (strain 972 / ATCC 24843) (Fission yeast) protein is Thymidylate kinase (tmp1).